Here is a 330-residue protein sequence, read N- to C-terminus: GMP reductase (330 aa).

Cys-180 functions as the Thioimidate intermediate in the catalytic mechanism. Leu-209–Val-232 lines the NADP(+) pocket.

Belongs to the IMPDH/GMPR family. GuaC type 2 subfamily.

It catalyses the reaction IMP + NH4(+) + NADP(+) = GMP + NADPH + 2 H(+). In terms of biological role, catalyzes the irreversible NADPH-dependent deamination of GMP to IMP. It functions in the conversion of nucleobase, nucleoside and nucleotide derivatives of G to A nucleotides, and in maintaining the intracellular balance of A and G nucleotides. The polypeptide is GMP reductase (Lactobacillus delbrueckii subsp. bulgaricus (strain ATCC 11842 / DSM 20081 / BCRC 10696 / JCM 1002 / NBRC 13953 / NCIMB 11778 / NCTC 12712 / WDCM 00102 / Lb 14)).